Here is a 267-residue protein sequence, read N- to C-terminus: tRNA pseudouridine synthase A (267 aa).

Residue Asp51 is the Nucleophile of the active site. Tyr109 lines the substrate pocket.

This sequence belongs to the tRNA pseudouridine synthase TruA family. As to quaternary structure, homodimer.

The catalysed reaction is uridine(38/39/40) in tRNA = pseudouridine(38/39/40) in tRNA. Its function is as follows. Formation of pseudouridine at positions 38, 39 and 40 in the anticodon stem and loop of transfer RNAs. In Staphylococcus aureus (strain USA300), this protein is tRNA pseudouridine synthase A.